The chain runs to 157 residues: Protein-export protein SecB (157 aa).

It belongs to the SecB family. In terms of assembly, homotetramer, a dimer of dimers. One homotetramer interacts with 1 SecA dimer.

Its subcellular location is the cytoplasm. In terms of biological role, one of the proteins required for the normal export of preproteins out of the cell cytoplasm. It is a molecular chaperone that binds to a subset of precursor proteins, maintaining them in a translocation-competent state. It also specifically binds to its receptor SecA. The sequence is that of Protein-export protein SecB from Alcanivorax borkumensis (strain ATCC 700651 / DSM 11573 / NCIMB 13689 / SK2).